The chain runs to 516 residues: MGLGGDQSFVPVMDSGQVRLKELGYKQELKRDLSVFSNFAISFSIISVLTGITTTYNTGLRFGGTVTLVYGWFLAGSFTMCVGLSMAEICSSYPTSGGLYYWSAMLAGPRWAPLASWMTGWFNIVGQWAVTASVDFSLAQLIQVIVLLSTGGRNGGGYKGSDFVVIGIHGGILFIHALLNSLPISVLSFIGQLAALWNLLGVLVLMILIPLVSTERATTKFVFTNFNTDNGLGITSYAYIFVLGLLMSQYTITGYDASAHMTEETVDADKNGPRGIISAIGISILFGWGYILGISYAVTDIPSLLSETNNSGGYAIAEIFYLAFKNRFGSGTGGIVCLGVVAVAVFFCGMSSVTSNSRMAYAFSRDGAMPMSPLWHKVNSREVPINAVWLSALISFCMALTSLGSIVAFQAMVSIATIGLYIAYAIPIILRVTLARNTFVPGPFSLGKYGMVVGWVAVLWVVTISVLFSLPVAYPITAETLNYTPVAVAGLVAITLSYWLFSARHWFTGPISNILS.

Helical transmembrane passes span 33–53, 70–90, 113–133, 164–184, 189–209, 232–252, 275–295, 328–348, 383–403, 406–426, 452–472, and 483–503; these read LSVFSNFAISFSIISVLTGIT, YGWFLAGSFTMCVGLSMAEIC, PLASWMTGWFNIVGQWAVTAS, VVIGIHGGILFIHALLNSLPI, FIGQLAALWNLLGVLVLMILI, LGITSYAYIFVLGLLMSQYTI, GIISAIGISILFGWGYILGIS, FGSGTGGIVCLGVVAVAVFFC, VPINAVWLSALISFCMALTSL, IVAFQAMVSIATIGLYIAYAI, VVGWVAVLWVVTISVLFSLPV, and YTPVAVAGLVAITLSYWLFSA.

The protein belongs to the amino acid-polyamine-organocation (APC) superfamily. Amino acid/choline transporter (ACT) (TC 2.A.3.4) family. In terms of tissue distribution, expressed in roots, rosette leaves, stems, cauline leaves, flowers and siliques.

Its subcellular location is the mitochondrion membrane. May play a role in primary carbon metabolism and plant growth, by mediating the transport of GABA from the cytosol to mitochondria. When expressed in a heterologous system (yeast), imports Arg and Ala across the plasma membrane and exports Lys and Glu, but does not transport proline. The chain is Amino-acid permease BAT1 (BAT1) from Arabidopsis thaliana (Mouse-ear cress).